The primary structure comprises 426 residues: Enolase 1 (426 aa).

(2R)-2-phosphoglycerate is bound at residue Gln163. Glu205 (proton donor) is an active-site residue. Positions 242, 283, and 310 each coordinate Mg(2+). Lys335, Arg364, Ser365, and Lys386 together coordinate (2R)-2-phosphoglycerate. The active-site Proton acceptor is the Lys335.

This sequence belongs to the enolase family. Mg(2+) serves as cofactor.

The protein localises to the cytoplasm. Its subcellular location is the secreted. It localises to the cell surface. The enzyme catalyses (2R)-2-phosphoglycerate = phosphoenolpyruvate + H2O. It participates in carbohydrate degradation; glycolysis; pyruvate from D-glyceraldehyde 3-phosphate: step 4/5. Catalyzes the reversible conversion of 2-phosphoglycerate (2-PG) into phosphoenolpyruvate (PEP). It is essential for the degradation of carbohydrates via glycolysis. This is Enolase 1 from Streptomyces coelicolor (strain ATCC BAA-471 / A3(2) / M145).